The primary structure comprises 417 residues: Protein translocase subunit SecD (417 aa).

6 helical membrane-spanning segments follow: residues 9–29, 236–256, 258–278, 288–308, 333–353, and 360–380; these read LLVS…PLVS, ASMK…LLYY, LSGL…LAVM, PGMA…VLIF, FTTI…LFYL, and GFAV…VTVT.

The protein belongs to the SecD/SecF family. SecD subfamily. As to quaternary structure, forms a complex with SecF. Part of the essential Sec protein translocation apparatus which comprises SecA, SecYEG and auxiliary proteins SecDF. Other proteins may also be involved.

It localises to the cell membrane. Part of the Sec protein translocase complex. Interacts with the SecYEG preprotein conducting channel. SecDF uses the proton motive force (PMF) to complete protein translocation after the ATP-dependent function of SecA. This Acidaminococcus fermentans (strain ATCC 25085 / DSM 20731 / CCUG 9996 / CIP 106432 / VR4) protein is Protein translocase subunit SecD.